A 344-amino-acid chain; its full sequence is MLLSDLVDLIKKGNSNFISSNIFEDLNIEDAASLDEAVNHQISFLEENNILKEKLDKSNASAIITSNNNEIISALKKLNISNIIVKNPRIAFAEVLNHLYKTINFNPGIHASAVIDKTAIIGADCHIGPNVYIGENTVIGNNNDILTGSSILGNVRIGDNNIIHPNCVVYENTTLKNNCVINSNSVIGSEGFGFIPKDDKWVKMPQKGGVKIMSFVEIGTNCCIDRPAVGITFIDEGTKLDNLVQIGHGVKIGKNCAFAAQVGIAGGAKIGDRVILAGQVGVNNRVKVGNNVIASSKCGIHCDIEDGKVISGFPAMENKSWLRSSSIFKKLPELAKKLRQLDKQ.

Residue His-248 is the Proton acceptor of the active site.

It belongs to the transferase hexapeptide repeat family. LpxD subfamily. Homotrimer.

It carries out the reaction a UDP-3-O-[(3R)-3-hydroxyacyl]-alpha-D-glucosamine + a (3R)-hydroxyacyl-[ACP] = a UDP-2-N,3-O-bis[(3R)-3-hydroxyacyl]-alpha-D-glucosamine + holo-[ACP] + H(+). It participates in bacterial outer membrane biogenesis; LPS lipid A biosynthesis. Catalyzes the N-acylation of UDP-3-O-acylglucosamine using 3-hydroxyacyl-ACP as the acyl donor. Is involved in the biosynthesis of lipid A, a phosphorylated glycolipid that anchors the lipopolysaccharide to the outer membrane of the cell. This is UDP-3-O-acylglucosamine N-acyltransferase from Prochlorococcus marinus (strain MIT 9312).